A 484-amino-acid polypeptide reads, in one-letter code: Coronin-1B (484 aa).

A Phosphoserine modification is found at S2. 5 WD repeats span residues 80–120 (GHTG…LTSP), 130–170 (GHTK…ELYR), 174–213 (LHPDLIYNVSWNHNGSLFCTACKDKSVRIIDPRRGTLVAE), 217–260 (AHEG…EPMA), and 265–305 (DSSN…PYIH). Residues 447–481 (KLEEVMHGLRALRVLVKEQGERISRLEEHLGRMEN) are a coiled coil.

This sequence belongs to the WD repeat coronin family. As to quaternary structure, forms homooligomers, but does not form complexes with the other coronins. Interacts with Arp2/3 complex components, including ACTR2, ARPC1B and ARPC2. Binds actin. Post-translationally, phosphorylation on Ser-2 regulates the interaction with the Arp2/3 complex and cell motility in fibroblasts. Phosphorylation does not seem to affect subcellular location.

The protein localises to the cytoplasm. Its subcellular location is the cytoskeleton. It localises to the stress fiber. Regulates leading edge dynamics and cell motility in fibroblasts. May be involved in cytokinesis and signal transduction. In Rattus norvegicus (Rat), this protein is Coronin-1B (Coro1b).